Consider the following 833-residue polypeptide: Leucine--tRNA ligase (833 aa).

The short motif at 41-52 (PYPSGAGLHVGH) is the 'HIGH' region element. Positions 610-614 (KMSKS) match the 'KMSKS' region motif. Residue Lys-613 coordinates ATP.

The protein belongs to the class-I aminoacyl-tRNA synthetase family.

Its subcellular location is the cytoplasm. The catalysed reaction is tRNA(Leu) + L-leucine + ATP = L-leucyl-tRNA(Leu) + AMP + diphosphate. This is Leucine--tRNA ligase from Streptococcus suis (strain 05ZYH33).